Reading from the N-terminus, the 661-residue chain is DNA-directed RNA polymerase subunit beta' (661 aa).

Residues Cys69, Cys71, Cys87, and Cys90 each contribute to the Zn(2+) site. Mg(2+)-binding residues include Asp489, Asp491, and Asp493.

It belongs to the RNA polymerase beta' chain family. RpoC1 subfamily. As to quaternary structure, in plastids the minimal PEP RNA polymerase catalytic core is composed of four subunits: alpha, beta, beta', and beta''. When a (nuclear-encoded) sigma factor is associated with the core the holoenzyme is formed, which can initiate transcription. It depends on Mg(2+) as a cofactor. Zn(2+) is required as a cofactor.

It is found in the plastid. It localises to the chloroplast. It carries out the reaction RNA(n) + a ribonucleoside 5'-triphosphate = RNA(n+1) + diphosphate. In terms of biological role, DNA-dependent RNA polymerase catalyzes the transcription of DNA into RNA using the four ribonucleoside triphosphates as substrates. In Chaetosphaeridium globosum (Charophycean green alga), this protein is DNA-directed RNA polymerase subunit beta'.